A 414-amino-acid chain; its full sequence is Glutathione gamma-glutamylcysteinyltransferase (414 aa).

One can recognise a Peptidase C83 domain in the interval 37-256; sequence QLKKSFYKRQ…GYVLLEPMHI (220 aa).

The protein belongs to the phytochelatin synthase family.

The enzyme catalyses [Glu(-Cys)](n)-Gly + glutathione + H(+) = [Glu(-Cys)](n+1)-Gly + glycine. In terms of biological role, required for detoxification of heavy metals such as cadmium and arsenate. The chain is Glutathione gamma-glutamylcysteinyltransferase from Schizosaccharomyces pombe (strain 972 / ATCC 24843) (Fission yeast).